We begin with the raw amino-acid sequence, 349 residues long: Putative F-box/LRR-repeat protein At3g16555 (349 aa).

The F-box domain occupies 1-48; that stretch reads MVLLPWELEEDILSRLPPRSLVQFRSVCKRWNALFDVKSFNKDQFARA. Residues 267 to 290 form an LRR repeat; that stretch reads VVWISLLTLPPNNLPNLFIVCYGI.

The chain is Putative F-box/LRR-repeat protein At3g16555 from Arabidopsis thaliana (Mouse-ear cress).